A 220-amino-acid chain; its full sequence is ATP synthase subunit delta (220 aa).

It belongs to the ATPase delta chain family. In terms of assembly, F-type ATPases have 2 components, F(1) - the catalytic core - and F(0) - the membrane proton channel. F(1) has five subunits: alpha(3), beta(3), gamma(1), delta(1), epsilon(1). F(0) has three main subunits: a(1), b(2) and c(10-14). The alpha and beta chains form an alternating ring which encloses part of the gamma chain. F(1) is attached to F(0) by a central stalk formed by the gamma and epsilon chains, while a peripheral stalk is formed by the delta and b chains.

Its subcellular location is the cell inner membrane. F(1)F(0) ATP synthase produces ATP from ADP in the presence of a proton or sodium gradient. F-type ATPases consist of two structural domains, F(1) containing the extramembraneous catalytic core and F(0) containing the membrane proton channel, linked together by a central stalk and a peripheral stalk. During catalysis, ATP synthesis in the catalytic domain of F(1) is coupled via a rotary mechanism of the central stalk subunits to proton translocation. Its function is as follows. This protein is part of the stalk that links CF(0) to CF(1). It either transmits conformational changes from CF(0) to CF(1) or is implicated in proton conduction. This chain is ATP synthase subunit delta, found in Gluconobacter oxydans (strain 621H) (Gluconobacter suboxydans).